Here is a 166-residue protein sequence, read N- to C-terminus: NADH-quinone oxidoreductase subunit B 1 (166 aa).

Positions 39, 40, 106, and 135 each coordinate [4Fe-4S] cluster.

It belongs to the complex I 20 kDa subunit family. In terms of assembly, NDH-1 is composed of 14 different subunits. Subunits NuoB, C, D, E, F, and G constitute the peripheral sector of the complex. The cofactor is [4Fe-4S] cluster.

Its subcellular location is the cell membrane. It catalyses the reaction a quinone + NADH + 5 H(+)(in) = a quinol + NAD(+) + 4 H(+)(out). Its function is as follows. NDH-1 shuttles electrons from NADH, via FMN and iron-sulfur (Fe-S) centers, to quinones in the respiratory chain. The immediate electron acceptor for the enzyme in this species is believed to be a menaquinone. Couples the redox reaction to proton translocation (for every two electrons transferred, four hydrogen ions are translocated across the cytoplasmic membrane), and thus conserves the redox energy in a proton gradient. This is NADH-quinone oxidoreductase subunit B 1 from Symbiobacterium thermophilum (strain DSM 24528 / JCM 14929 / IAM 14863 / T).